The sequence spans 395 residues: D-serine dehydratase (395 aa).

An N6-(pyridoxal phosphate)lysine modification is found at Lys46. Residues Tyr184, Tyr191, Thr232, Gly254, and Asn255 each contribute to the pyridoxal 5'-phosphate site. The Zn(2+) site is built by His365 and Cys367.

Belongs to the DSD1 family. Pyridoxal 5'-phosphate serves as cofactor. The cofactor is Zn(2+).

The enzyme catalyses D-serine = pyruvate + NH4(+). Its function is as follows. Catalyzes the conversion of D-serine to pyruvate and ammonia. Plays a role in D-serine detoxification. This is D-serine dehydratase from Dictyostelium discoideum (Social amoeba).